Reading from the N-terminus, the 654-residue chain is Probable protein phosphatase 2C 23 (654 aa).

A disordered region spans residues 11–30; that stretch reads CLTGGAGRNKKPELSILEPD. S147 carries the phosphoserine modification. Residues 243–645 form the PPM-type phosphatase domain; that stretch reads DVSLESQNLQ…DDVSIVVISL (403 aa). The Mn(2+) site is built by D280 and G281. The disordered stretch occupies residues 309 to 336; it reads DDPKTDAKSSDEADVENRDSSSEKKSKN. Positions 573 and 636 each coordinate Mn(2+).

This sequence belongs to the PP2C family. Mg(2+) serves as cofactor. Mn(2+) is required as a cofactor. Expressed in seedlings, roots, leaves, stems, young inflorescences, flowers and siliques.

Its subcellular location is the nucleus. It catalyses the reaction O-phospho-L-seryl-[protein] + H2O = L-seryl-[protein] + phosphate. The catalysed reaction is O-phospho-L-threonyl-[protein] + H2O = L-threonyl-[protein] + phosphate. Involved in leaf development regulation. In Arabidopsis thaliana (Mouse-ear cress), this protein is Probable protein phosphatase 2C 23 (PLL4).